The sequence spans 756 residues: Hyperosmolality-gated Ca2+ permeable channel 1.5 (756 aa).

Transmembrane regions (helical) follow at residues 7–27 (IGVAATINILTAFAFFIAFAI), 101–121 (IYLLGLKIFFPIACIAFTVMV), 154–174 (SRFWVHLCMAYVITFWTCFVL), 373–393 (LVIAVAFFFLTFFFMIPIAFV), 425–445 (FLPGIALKIFLIVLPSILMLM), 465–485 (YYMFQFINVFLCSIIAGTALQ), 510–530 (ATFFITYIMVDGWAGVAGEIL), 574–594 (FILGLVYAAVSPILLPFILVF), 628–648 (VVIALIVSQLLLMGLLSTKKA), and 651–671 (STPLLFILPVLTIGFHKFCQG). The disordered stretch occupies residues 731-756 (PDKTPDLVATKRGSRRFNSGSAETFT). Residues 746-756 (RFNSGSAETFT) are compositionally biased toward polar residues.

Belongs to the CSC1 (TC 1.A.17) family.

The protein localises to the membrane. Acts as an osmosensitive calcium-permeable cation channel. The sequence is that of Hyperosmolality-gated Ca2+ permeable channel 1.5 from Arabidopsis thaliana (Mouse-ear cress).